The chain runs to 466 residues: MYLTIWLVSILALGTWGQKFNRFCHYNSWALSRNPQHGLVPEDIDPFLCTHLILGFAEIDESGLRLKDPNHYQQEYLYQRIVRLRRINPRLNMILSVGGWDKSQEGYSKLVSSRENILFFTKWIITYLRRHDFDGLDLDWEYPTFKGSPMGDKKKFVDLVENLAYEFDIEEIPDIKWKLTLTWTADPLESVRTSAYDIKGIASKVHNVNLKMYDFHGHWDDPLQVNHHSPLTSPNSPRNVNELAKSWVKAGVRIEKLILGIPFFGRSFTLKTANMSVPGSPAVGPGSDFGDGIPIHNLCHIIRGGTKELYLPEKKVPYIVSGSEWIGYDNPRSVMEKAQLVFNNALAGVMIYSLDMDDHHGTCGRKWPMMMAVIHGLNAYMEYIDSKHKSLELTFNKKILRARVSLRNYRRRNQQEKVAEMEQRIRHLEQELQQSMGNMAYERQQAQAMLNRGVSLPPIEQQSWSW.

The first 17 residues, 1–17 (MYLTIWLVSILALGTWG), serve as a signal peptide directing secretion. The region spanning 20–380 (FNRFCHYNSW…MAVIHGLNAY (361 aa)) is the GH18 domain. Cys24 and Cys49 are joined by a disulfide. Glu141 serves as the catalytic Proton donor. A coiled-coil region spans residues 408–442 (NYRRRNQQEKVAEMEQRIRHLEQELQQSMGNMAYE).

Belongs to the glycosyl hydrolase 18 family. In terms of tissue distribution, prismatic layer of shell (at protein level). Expressed primarily in the mantle with highest level in the mantle edge and lower level in the mantle pallium.

It localises to the secreted. It carries out the reaction Random endo-hydrolysis of N-acetyl-beta-D-glucosaminide (1-&gt;4)-beta-linkages in chitin and chitodextrins.. The sequence is that of Putative chitinase from Pinctada maxima (Silver-lipped pearl oyster).